A 442-amino-acid polypeptide reads, in one-letter code: UDP-N-acetylmuramate--L-alanine ligase (442 aa).

109–115 contacts ATP; the sequence is GAHGKTS.

It belongs to the MurCDEF family.

Its subcellular location is the cytoplasm. The enzyme catalyses UDP-N-acetyl-alpha-D-muramate + L-alanine + ATP = UDP-N-acetyl-alpha-D-muramoyl-L-alanine + ADP + phosphate + H(+). The protein operates within cell wall biogenesis; peptidoglycan biosynthesis. Its function is as follows. Cell wall formation. In Streptococcus pyogenes serotype M28 (strain MGAS6180), this protein is UDP-N-acetylmuramate--L-alanine ligase.